Reading from the N-terminus, the 133-residue chain is ATP synthase epsilon chain, chloroplastic (133 aa).

The protein belongs to the ATPase epsilon chain family. F-type ATPases have 2 components, CF(1) - the catalytic core - and CF(0) - the membrane proton channel. CF(1) has five subunits: alpha(3), beta(3), gamma(1), delta(1), epsilon(1). CF(0) has three main subunits: a, b and c.

It localises to the plastid. The protein resides in the chloroplast thylakoid membrane. Its function is as follows. Produces ATP from ADP in the presence of a proton gradient across the membrane. This is ATP synthase epsilon chain, chloroplastic from Vitis vinifera (Grape).